Consider the following 156-residue polypeptide: Ribonuclease H (156 aa).

In terms of domain architecture, RNase H type-1 spans 1 to 142 (MGKQVEIFTD…CDELARAAAN (142 aa)). Positions 10, 48, 70, and 134 each coordinate Mg(2+).

It belongs to the RNase H family. Monomer. The cofactor is Mg(2+).

Its subcellular location is the cytoplasm. It carries out the reaction Endonucleolytic cleavage to 5'-phosphomonoester.. Its function is as follows. Endonuclease that specifically degrades the RNA of RNA-DNA hybrids. In Photorhabdus laumondii subsp. laumondii (strain DSM 15139 / CIP 105565 / TT01) (Photorhabdus luminescens subsp. laumondii), this protein is Ribonuclease H.